The following is a 522-amino-acid chain: Cyclic GMP-AMP synthase (522 aa).

Residues 1–144 (MQPWHGKAMQ…PPGPWDVPSP (144 aa)) form a disordered region. DNA-binding regions lie at residues 1–160 (MQPW…DAAP) and 173–215 (KLSR…GSYY). At Lys7 the chain carries N6-acetyllysine. Phosphoserine is present on Ser13. Lys21 is subject to N6-acetyllysine. Residue Ser37 is modified to Phosphoserine. Lys47, Lys50, Lys56, Lys62, and Lys63 each carry N6-acetyllysine. The residue at position 64 (Ser64) is a Phosphoserine. Positions 64 to 73 (SAPDTQERPP) are enriched in basic and acidic residues. The required for association with the cell membrane stretch occupies residues 64–75 (SAPDTQERPPVR). At Thr68 the chain carries Phosphothreonine. Lys82 and Lys83 each carry N6-acetyllysine. Over residues 88–97 (AQDTQPSDAT) the composition is skewed to polar residues. Position 91 is a phosphothreonine (Thr91). Phosphoserine occurs at positions 98, 116, and 129. The span at 98–118 (SAPGAEGLEPPAAREPALSRA) shows a compositional bias: low complexity. The tract at residues 120-160 (SCRQRGARCSTKPRPPPGPWDVPSPGLPVSAPILVRRDAAP) is required for activation upon DNA viral infection. N6-lactoyllysine is present on Lys131. Pro residues predominate over residues 132-144 (PRPPPGPWDVPSP). A Phosphoserine modification is found at Ser143. Residues 169–174 (LEKLKL) carry the Nuclear export signal motif. A Glycyl lysine isopeptide (Lys-Gly) (interchain with G-Cter in ubiquitin) cross-link involves residue Lys173. PolyADP-ribosyl aspartic acid is present on Asp191. Asn210 bears the (Microbial infection) Deamidated asparagine; by herpes simplex virus 1/HHV-1 UL37 mark. A GTP-binding site is contributed by Thr211. Ser213 bears the Phosphoserine mark. Ser213 provides a ligand contact to ATP. Tyr215 carries the phosphotyrosine; by BLK modification. Positions 225 and 227 each coordinate Mg(2+). 225 to 227 (EFD) lines the ATP pocket. Asp227 contributes to the 2',3'-cGAMP binding site. Lys231 is covalently cross-linked (Glycyl lysine isopeptide (Lys-Gly) (interchain with G-Cter in SUMO)). A Glycyl lysine isopeptide (Lys-Gly) (interchain with G-Cter in ubiquitin) cross-link involves residue Lys285. Glu286 is modified (5-glutamyl polyglutamate). Positions 295-305 (DVIMKRKRGGS) match the Nuclear localization signal motif. The short motif at 299–302 (KRKR) is the KRKR-loop element. Residue Ser305 is modified to Phosphoserine; by CDK1 and PKB. A 5-glutamyl glutamate modification is found at Glu314. Asp319 serves as a coordination point for GTP. Asp319 lines the Mg(2+) pocket. Position 319 (Asp319) interacts with 2',3'-cGAMP. The segment at 341 to 382 (QNWLSAKVRKQLRLKPFYLVPKHAKEGNGFQEETWRLSFSHI) is interaction with collided ribosomes. A Glycyl lysine isopeptide (Lys-Gly) (interchain with G-Cter in SUMO); alternate cross-link involves residue Lys347. Lys347 is covalently cross-linked (Glycyl lysine isopeptide (Lys-Gly) (interchain with G-Cter in ubiquitin); alternate). Residues Lys362 and Arg376 each contribute to the 2',3'-cGAMP site. 376–383 (RLSFSHIE) is a binding site for GTP. 380-383 (SHIE) provides a ligand contact to ATP. At Lys384 the chain carries N6-acetyllysine. Residue Lys384 forms a Glycyl lysine isopeptide (Lys-Gly) (interchain with G-Cter in SUMO); alternate linkage. A Glycyl lysine isopeptide (Lys-Gly) (interchain with G-Cter in ubiquitin); alternate cross-link involves residue Lys384. The interval 384 to 407 (KEILNNHGKSKTCCENKEEKCCRK) is DNA-binding. Asn389 is subject to (Microbial infection) Deamidated asparagine; by herpes simplex virus 1/HHV-1 UL37. His390 is a Zn(2+) binding site. Lys392 and Lys394 each carry N6-acetyllysine. Residue Lys394 forms a Glycyl lysine isopeptide (Lys-Gly) (interchain with G-Cter in SUMO) linkage. Zn(2+)-binding residues include Cys396, Cys397, and Cys404. 2 S-palmitoyl cysteine lipidation sites follow: Cys404 and Cys405. Glycyl lysine isopeptide (Lys-Gly) (interchain with G-Cter in ubiquitin) cross-links involve residues Lys411, Lys414, Lys427, and Lys428. Lys414 carries the N6-acetyllysine modification. Lys414 provides a ligand contact to ATP. The KKH-loop motif lies at 427–429 (KKH). Phosphoserine occurs at positions 434 and 435. An ATP-binding site is contributed by 435–439 (SYHVK). (Microbial infection) Deamidated glutamine; by herpes simplex virus 1/HHV-1 UL37 occurs at positions 451 and 454. Cys474 carries S-palmitoyl cysteine lipidation. Lys479 is covalently cross-linked (Glycyl lysine isopeptide (Lys-Gly) (interchain with G-Cter in SUMO); alternate). Residue Lys479 forms a Glycyl lysine isopeptide (Lys-Gly) (interchain with G-Cter in ubiquitin); alternate linkage. Lys506 is modified (N6-methyllysine).

This sequence belongs to the mab-21 family. Monomer in the absence of DNA. Homodimer in presence of dsDNA: forms a 2:2 dimer with two enzymes binding to two DNA molecules. Interacts with nucleosomes; interaction is mainly mediated via histones H2A and H2B and inactivates the nucleotidyltransferase activity by blocking DNA-binding and subsequent activation. Interacts with PQBP1 (via WW domain). Interacts with TRIM14; this interaction recruits USP14, leading to deubiquitinate and stabilize CGAS and promote type I interferon production. Interacts with ZCCHC3; promoting sensing of dsDNA by CGAS. Interacts (when not monomethylated) with (poly-ADP-ribosylated) PARP1; interaction takes place in the nucleus and prevents the formation of the PARP1-TIMELESS complex. Interacts (when monomethylated) with SGF29; interaction with SGF29 prevents interaction with PARP1. Interacts with PCBP2; preventing the formation of liquid-like droplets in which CGAS is activated. Interacts with IRGM; promoting CGAS degradation. Interacts with DDX41. As to quaternary structure, (Microbial infection) Interacts with herpes virus 8/HHV-8 protein ORF52; this interaction inhibits cGAS enzymatic activity by preventing the formation of liquid-like droplets by CGAS. In terms of assembly, (Microbial infection) Interacts with herpes simplex virus 1 protein UL37; this interaction deaminates CGAS and inhibits its activation. (Microbial infection) Interacts with vaccinia virus protein OPG067; this interaction promotes CGAS proteasomal degradation. As to quaternary structure, (Microbial infection) Interacts with cytomegalovirus protein UL31; this interaction promotes dissociation of DNA from CGAS, thereby inhibiting the enzymatic activity of CGAS. In terms of assembly, (Microbial infection) Interacts with herpes simplex virus 1 tegument protein VP22 (UL49); this interaction inhibits cGAS enzymatic activity by preventing the formation of liquid-like droplets by CGAS. (Microbial infection) Interacts with herpesvirus 3 tegument protein VP22 (ORF9); this interaction inhibits cGAS enzymatic activity by preventing the formation of liquid-like droplets by CGAS. As to quaternary structure, (Microbial infection) Interacts with human cytomegalovirus proteins UL42 and UL83; these interactions result in the inhibition of cGAS-STING signaling. Requires Mg(2+) as cofactor. The cofactor is Mn(2+). Zn(2+) is required as a cofactor. The N-terminal disordered part (1-160) is phosphorylated by AURKB during the G2-M transition, blocking CGAS liquid phase separation and preventing activation. Phosphorylation at Tyr-215 by BLK promotes cytosolic retention. Localizes into the nucleus following dephosphorylation at Tyr-215. Phosphorylation at Ser-435 activates the nucleotidyltransferase activity. Dephosphorylation at Ser-435 by PPP6C impairs its ability to bind GTP, thereby inactivating it. Phosphorylation at Thr-68 and Ser-213 by PRKDC inhibits its cyclic GMP-AMP synthase activity by impairing homodimerization and activation. Phosphorylation at Ser-305 by AKT (AKT1, AKT2 or AKT3) suppresses the nucleotidyltransferase activity. Phosphorylation at Ser-305 by CDK1 during mitosis leads to its inhibition, thereby preventing CGAS activation by self-DNA during mitosis. Dephosphorylated at Ser-305 by protein phosphatase PP1 upon mitotic exit. Post-translationally, ubiquitinated at Lys-414 via 'Lys-48'-linked polyubiquitin chains, leading to its SQSTM1-mediated autophagic degradation. Interaction with TRIM14 promotes recruitment of USP14, leading to deubiquitinate Lys-414 and stabilize CGAS. Ubiquitinated at Lys-173 and Lys-384 by RNF185 via 'Lys-27'-linked polyubiquitination, promoting CGAS cyclic GMP-AMP synthase activity. Monoubiquitination at Lys-347 by TRIM56 promotes oligomerization and subsequent activation. Monoubiquitination by TRIM41 promotes CGAS activation. Ubiquitination at Lys-285 and Lys-479 via 'Lys-48'-linked polyubiquitination promotes its degradation. Deubiquitination at Lys-285 by USP29 promotes its stabilization. Deubiquitinated by USP27X, promoting its stabilization. Ubiquitinated at Lys-411 via 'Lys-63'-linked polyubiquitin chains by MARCHF8, leading to the inhibition of its DNA binding ability. In cycling cells, nucleosome-bound CGAS is ubiquitinated at Lys-427 and Lys-428 via 'Lys-48'-linked polyubiquitin chains by the ECS(SPSB3) complex, leading to its degradation: ubiquitination and degradation of nuclear CGAS during G1 and G2 phases is required to promote low intranuclear CGAS abundance before the next mitotic cycle. In terms of processing, sumoylated at Lys-231 and Lys-479 by TRIM38 in uninfected cells and during the early phase of viral infection, promoting its stability by preventing ubiquitination at Lys-285 and Lys-479, and subsequent degradation. Desumoylated by SENP2 during the late phase of viral infection. Sumoylation at Lys-347, Lys-384 and Lys-394 prevents DNA-binding, oligomerization and nucleotidyltransferase activity. Desumoylation at Lys-347, Lys-384 and Lys-394 by SENP7 relieves inhibition and activates CGAS. Polyglutamylated by TTLL6 at Glu-286, leading to impair DNA-binding activity. Monoglutamylated at Glu-314 by TTLL4, leading to impair the nucleotidyltransferase activity. Deglutamylated by AGBL5/CCP5 and AGBL6/CCP6. Post-translationally, acetylation at Lys-384, Lys-394 and Lys-414 inhibits the cyclic GMP-AMP synthase activity. Deacetylated upon cytosolic DNA challenge such as viral infections. Acetylation can be mediated by aspirin (acetylsalicylate) drug, which directly acetylates CGAS. Acetylation by aspirin efficiently inhibits CGAS-mediated immune responses and is able to suppress self-DNA-induced autoimmunity. Acetylation at Lys-47, Lys-56, Lys-62 and Lys-83 by KAT5 increases the cyclic GMP-AMP synthase activity by promoting DNA-binding and subsequent activation. In terms of processing, proteolytically cleaved by apoptotic caspases during apoptosis, leading to its inactivation. The damage of the nucleus and the mitochondria during apoptosis leads to leakage of nuclear and mitochondrial DNA, which activate CGAS: cleavage and inactivation during apoptosis in required to prevent cytokine overproduction. Cleaved by CASP3 at Asp-319 during virus-induced apoptosis, thereby inactivating it and preventing cytokine overproduction. Cleaved by CASP1 at Asp-140 and Asp-157 upon DNA virus infection; the cleavage impairs cGAMP production. Also cleaved by the pyroptotic CASP4 and CASP5 during non-canonical inflammasome activation; they don't cut at the same sites than CASP1. Degraded via selective autophagy following interaction with IRGM. IRGM promotes CGAS recruitment to autophagosome membranes, promoting its SQSTM1/p62-dependent autophagic degradation. Post-translationally, poly-ADP-ribosylation at Asp-191 by PARP1 impairs DNA-binding, thereby preventing the cyclic GMP-AMP synthase activity. In terms of processing, palmitoylation at Cys-474 by ZDHHC18 impairs DNA-binding, thereby preventing the cyclic GMP-AMP synthase activity. Palmitoylation at Cys-404 and Cys-405 by ZDHHC9 promotes homodimerization and cyclic GMP-AMP synthase activity. Depalmitoylation at Cys-404 and Cys-405 by LYPLAL1 impairs homodimerization and cyclic GMP-AMP synthase activity. Monomethylated at Lys-506 by SETD7. Monomethylation promotes interaction with SGF29, preventing interaction between PARP1 nad SGF29. Demethylation by RIOX1 promotes interaction with PARP1, followed by PARP1 inactivation. Post-translationally, lactylation by AARS2 prevents ability to undergo liquid-liquid phase separation (LLPS), thereby inhibiting CGAS activation. In terms of processing, (Microbial infection) Deamidated on 'Asn-210' by herpes simplex virus 1 protein UL37. This modification significantly reduces CGAS-dependent cGAMP production and innate immune signaling induced by dsDNA. (Microbial infection) Degraded by an autophagy-mediated mechanism in presence of Chikungunya virus capsid protein. In terms of tissue distribution, expressed in the monocytic cell line THP1.

It localises to the nucleus. Its subcellular location is the chromosome. The protein localises to the cell membrane. The protein resides in the cytoplasm. It is found in the cytosol. It catalyses the reaction GTP + ATP = 2',3'-cGAMP + 2 diphosphate. The enzyme catalyses GTP + ATP = pppGp(2'-5')A + diphosphate. It carries out the reaction pppGp(2'-5')A = 2',3'-cGAMP + diphosphate. Its activity is regulated as follows. The enzyme activity is strongly increased by double-stranded DNA (dsDNA), but not by single-stranded DNA or RNA. DNA-binding induces the formation of liquid-like droplets in which CGAS is activated. Liquid-like droplets also create a selective environment that restricts entry of negative regulators, such as TREX1 or BANF1/BAF, allowing sensing of DNA. A number of mechanisms exist to restrict its activity toward self-DNA. The nucleotidyltransferase activity is inhibited in the nucleus via its association with nucleosomes: interacts with the acidic patch of histones H2A and H2B, thereby blocking DNA-binding and subsequent activation. CGAS is also inactive when associated with mitotic chromatin. Chromatin-bound CGAS cannot be activated by exogenous DNA in mitotic cells: phosphorylation of the N-terminal disordered part by AURKB during the G2-M transition blocks CGAS liquid phase separation and activation. Activity toward self-DNA is inhibited by BANF1/BAF upon acute loss of nuclear membrane integrity: BANF1/BAF acts by outcompeting CGAS for DNA-binding, thereby preventing CGAS activation. DNA-induced activation at micronuclei is also limited by TREX1, which degrades micronuclear DNA upon nuclear envelope rupture, thereby preventing CGAS activation. CGAS can be released from nucleosomes and activated by MRE11 component of the MRN complex, which displaces CGAS from acidic-patch-mediated sequestration. Acetylation at Lys-384, Lys-394 and Lys-414 inhibits the cyclic GMP-AMP synthase activity. Inhibited by aspirin (acetylsalicylate) drug, which acetylates CGAS. Acetylation by KAT5 increases the cyclic GMP-AMP synthase activity by promoting DNA-binding and subsequent activation. Phosphorylation at Ser-305 suppresses the nucleotidyltransferase activity. Phosphorylation at Ser-435 promotes the cyclic GMP-AMP synthase activity. Phosphorylation at Thr-68 and Ser-213 inhibits its cyclic GMP-AMP synthase activity. Ubiquitination at Lys-173 and Lys-384 via 'Lys-27'-linked polyubiquitination enhances the cyclic GMP-AMP synthase activity. Monoubiquitination at Lys-347 promotes oligomerization and subsequent activation. Sumoylation at Lys-347, Lys-384 and Lys-394 prevents DNA-binding, oligomerization and nucleotidyltransferase activity. The enzyme activity is impaired by the cleavage at Asp-140 and Asp-157 produced by CASP1. In addition to DNA, also activated by collided ribosomes upon translation stress: specifically binds collided ribosomes, promoting its activation and triggering type-I interferon production. Strongly inhibited by compound PF-06928215, which is specific for human protein. Inhibited by small-molecule inhibitors with a pyridoindole tricyclic core G108, G140 and G150. (Microbial infection) Nucleotidyltransferase activity is inhibited by different herpesvirus tegument proteins (Herpes simplex virus 1 tegument protein VP22, herpes virus 8 protein ORF52 and herpesvirus 3 tegument protein VP22/ORF9). Viral tegument proteins act by disrupting liquid-like droplets in which CGAS is activated, thereby preventing CGAS activity. In terms of biological role, nucleotidyltransferase that catalyzes the formation of cyclic GMP-AMP (2',3'-cGAMP) from ATP and GTP and plays a key role in innate immunity. Catalysis involves both the formation of a 2',5' phosphodiester linkage at the GpA step and the formation of a 3',5' phosphodiester linkage at the ApG step, producing c[G(2',5')pA(3',5')p]. Acts as a key DNA sensor: directly binds double-stranded DNA (dsDNA), inducing the formation of liquid-like droplets in which CGAS is activated, leading to synthesis of 2',3'-cGAMP, a second messenger that binds to and activates STING1, thereby triggering type-I interferon production. Preferentially recognizes and binds curved long dsDNAs of a minimal length of 40 bp. Acts as a key foreign DNA sensor, the presence of double-stranded DNA (dsDNA) in the cytoplasm being a danger signal that triggers the immune responses. Has antiviral activity by sensing the presence of dsDNA from DNA viruses in the cytoplasm. Also acts as an innate immune sensor of infection by retroviruses, such as HIV-2, by detecting the presence of reverse-transcribed DNA in the cytosol. In contrast, HIV-1 is poorly sensed by CGAS, due to its capsid that cloaks viral DNA from CGAS detection. Detection of retroviral reverse-transcribed DNA in the cytosol may be indirect and be mediated via interaction with PQBP1, which directly binds reverse-transcribed retroviral DNA. Also detects the presence of DNA from bacteria, such as M.tuberculosis. 2',3'-cGAMP can be transferred from producing cells to neighboring cells through gap junctions, leading to promote STING1 activation and convey immune response to connecting cells. 2',3'-cGAMP can also be transferred between cells by virtue of packaging within viral particles contributing to IFN-induction in newly infected cells in a cGAS-independent but STING1-dependent manner. Also senses the presence of neutrophil extracellular traps (NETs) that are translocated to the cytosol following phagocytosis, leading to synthesis of 2',3'-cGAMP. In addition to foreign DNA, can also be activated by endogenous nuclear or mitochondrial DNA. When self-DNA leaks into the cytosol during cellular stress (such as mitochondrial stress, SARS-CoV-2 infection causing severe COVID-19 disease, DNA damage, mitotic arrest or senescence), or is present in form of cytosolic micronuclei, CGAS is activated leading to a state of sterile inflammation. Acts as a regulator of cellular senescence by binding to cytosolic chromatin fragments that are present in senescent cells, leading to trigger type-I interferon production via STING1 and promote cellular senescence. Also involved in the inflammatory response to genome instability and double-stranded DNA breaks: acts by localizing to micronuclei arising from genome instability. Micronuclei, which are frequently found in cancer cells, consist of chromatin surrounded by their own nuclear membrane: following breakdown of the micronuclear envelope, a process associated with chromothripsis, CGAS binds self-DNA exposed to the cytosol, leading to 2',3'-cGAMP synthesis and subsequent activation of STING1 and type-I interferon production. Activated in response to prolonged mitotic arrest, promoting mitotic cell death. In a healthy cell, CGAS is however kept inactive even in cellular events that directly expose it to self-DNA, such as mitosis, when cGAS associates with chromatin directly after nuclear envelope breakdown or remains in the form of postmitotic persistent nuclear cGAS pools bound to chromatin. Nuclear CGAS is inactivated by chromatin via direct interaction with nucleosomes, which block CGAS from DNA binding and thus prevent CGAS-induced autoimmunity. Also acts as a suppressor of DNA repair in response to DNA damage: inhibits homologous recombination repair by interacting with PARP1, the CGAS-PARP1 interaction leading to impede the formation of the PARP1-TIMELESS complex. In addition to DNA, also sense translation stress: in response to translation stress, translocates to the cytosol and associates with collided ribosomes, promoting its activation and triggering type-I interferon production. In contrast to other mammals, human CGAS displays species-specific mechanisms of DNA recognition and produces less 2',3'-cGAMP, allowing a more fine-tuned response to pathogens. The protein is Cyclic GMP-AMP synthase of Homo sapiens (Human).